The chain runs to 511 residues: Serine hydroxymethyltransferase (511 aa).

At lysine 287 the chain carries N6-(pyridoxal phosphate)lysine.

Belongs to the SHMT family. In terms of assembly, homotetramer. Requires pyridoxal 5'-phosphate as cofactor.

The enzyme catalyses (6R)-5,10-methylene-5,6,7,8-tetrahydrofolate + glycine + H2O = (6S)-5,6,7,8-tetrahydrofolate + L-serine. Its pathway is one-carbon metabolism; tetrahydrofolate interconversion. Functionally, interconversion of serine and glycine. This is Serine hydroxymethyltransferase from Caenorhabditis briggsae.